The sequence spans 375 residues: Aminomethyltransferase (375 aa).

It belongs to the GcvT family. As to quaternary structure, the glycine cleavage system is composed of four proteins: P, T, L and H.

The enzyme catalyses N(6)-[(R)-S(8)-aminomethyldihydrolipoyl]-L-lysyl-[protein] + (6S)-5,6,7,8-tetrahydrofolate = N(6)-[(R)-dihydrolipoyl]-L-lysyl-[protein] + (6R)-5,10-methylene-5,6,7,8-tetrahydrofolate + NH4(+). The glycine cleavage system catalyzes the degradation of glycine. The sequence is that of Aminomethyltransferase from Cupriavidus metallidurans (strain ATCC 43123 / DSM 2839 / NBRC 102507 / CH34) (Ralstonia metallidurans).